The primary structure comprises 1481 residues: Cystic fibrosis transmembrane conductance regulator (1481 aa).

Topologically, residues 1–77 (MQRSPLEKAS…KLINALRRCF (77 aa)) are cytoplasmic. Residues 78–98 (FWRFMFYGILLYLGEVTKAVQ) traverse the membrane as a helical segment. Residues 81–365 (FMFYGILLYL…WAVQTWYDSL (285 aa)) form the ABC transmembrane type-1 1 domain. At 99 to 122 (PLLLGRIIASYDPDNKEERSIAIY) the chain is on the extracellular side. The helical transmembrane segment at 123 to 146 (LGIGLCLLFIVRTLLLHPAIFGLH) threads the bilayer. Residues 147–195 (HIGMQMRIAMFSLIYKKTLKLSSRVLDKISIGQLVSLLSNNLNKFDEGL) are Cytoplasmic-facing. The chain crosses the membrane as a helical span at residues 196 to 216 (ALAHFVWIVPLQVALLMGLIW). Residues 217 to 222 (ELLQAS) are Extracellular-facing. The helical transmembrane segment at 223–243 (AFCGLGFLIVLALFQAGLGRM) threads the bilayer. Residues 244 to 298 (MMKYRDQRAGKINERLVITSEMIENIQSVKAYCWEEAMEKMIENLRQTELKLTRK) lie on the Cytoplasmic side of the membrane. Residues 299-319 (AAYVRYFNSSAFFFSGFFVVF) traverse the membrane as a helical segment. Topologically, residues 320–339 (LSVLPYALIKGIVLRKIFTT) are extracellular. The chain crosses the membrane as a helical span at residues 340-358 (ISFCIVLRMAVTRQFPWAV). Residues 359–858 (QTWYDSLGAI…YLRYITVHKS (500 aa)) are Cytoplasmic-facing. ATP is bound by residues Trp-401, Ser-434, 458–465 (GSTGAGKT), and Gln-493. The 224-residue stretch at 423–646 (NDDDSLFFSN…RPDFSSKLMG (224 aa)) folds into the ABC transporter 1 domain. Cys-524 is lipidated: S-palmitoyl cysteine. Phosphoserine occurs at positions 549 and 660. The segment at 654 to 831 (SAERRNSILT…EEINEEDLKE (178 aa)) is disordered R region. Ser-670 is modified (phosphoserine; by PKA). Phosphoserine is present on Ser-686. Residue Lys-688 forms a Glycyl lysine isopeptide (Lys-Gly) (interchain with G-Cter in ubiquitin) linkage. A phosphoserine mark is found at Ser-700 and Ser-712. The residue at position 717 (Thr-717) is a Phosphothreonine. Phosphoserine is present on residues Ser-737, Ser-753, Ser-768, Ser-790, Ser-795, and Ser-813. A helical membrane pass occupies residues 859-879 (LIFVLIWCLVIFLAEVAASLV). Positions 859–1155 (LIFVLIWCLV…AVNSSIDVDS (297 aa)) constitute an ABC transmembrane type-1 2 domain. At 880 to 918 (VLWFLGNTPPQDKGNSTYSRNNSYAVIITRTSSYYVFYI) the chain is on the extracellular side. N-linked (GlcNAc...) asparagine glycosylation is found at Asn-894 and Asn-900. A discontinuously helical transmembrane segment spans residues 919-939 (YVGVADTLLAMGFFRGLPLVH). Residues 940-990 (TLITVSKILHHKMLHSVLQAPMSTLNTLKAGGILNRFSKDIAILDDLLPLT) lie on the Cytoplasmic side of the membrane. The chain crosses the membrane as a helical span at residues 991–1011 (IFDFIQLLLIVIGAIAVVAVL). The Extracellular portion of the chain corresponds to 1012–1013 (QP). Residues 1014 to 1034 (YIFVATVPVIVAFIMLRAYFL) form a helical membrane-spanning segment. Topologically, residues 1035 to 1095 (QTSQQLKQLE…TANWFLYLST (61 aa)) are cytoplasmic. Residues 1096–1116 (LRWFQMRIEMIFVIFFIAVTF) form a helical membrane-spanning segment. Residues 1117-1130 (ISILTTGEGEGTVG) lie on the Extracellular side of the membrane. The chain crosses the membrane as a helical span at residues 1131-1151 (IILTLAMNIMSTLQWAVNSSI). Topologically, residues 1152-1481 (DVDSLMRSVS…TEEEVQDTRL (330 aa)) are cytoplasmic. The region spanning 1211 to 1444 (MTVKDLTAKY…RSLFRQAISP (234 aa)) is the ABC transporter 2 domain. ATP contacts are provided by residues Tyr-1220 and 1245-1252 (GRTGSGKS). The segment at 1387–1481 (RTLKQAFADC…TEEEVQDTRL (95 aa)) is interaction with GORASP2. Cys-1396 is lipidated: S-palmitoyl cysteine. Phosphoserine occurs at positions 1445 and 1457. The tract at residues 1462–1481 (QPQIAALKEETEEEVQDTRL) is disordered. Over residues 1471-1481 (ETEEEVQDTRL) the composition is skewed to acidic residues. Residues 1479-1481 (TRL) carry the PDZ-binding motif.

This sequence belongs to the ABC transporter superfamily. ABCC family. CFTR transporter (TC 3.A.1.202) subfamily. In terms of assembly, monomer; does not require oligomerization for channel activity. May form oligomers in the membrane. Interacts with SLC26A3, SLC26A6 and NHERF1. Interacts with SHANK2. Interacts with MYO6. Interacts (via C-terminus) with GOPC (via PDZ domain); this promotes CFTR internalization and thereby decreases channel activity. Interacts with SLC4A7 through NHERF1. Found in a complex with MYO5B and RAB11A. Interacts with ANO1. Interacts with SLC26A8. Interacts with AHCYL1; the interaction increases CFTR activity. Interacts with CSE1L. The core-glycosylated form interacts with GORASP2 (via PDZ GRASP-type 1 domain) in respone to ER stress. Interacts with MARCHF2; the interaction leads to CFTR ubiqtuitination and degradation. Interacts with ADGRG2. In terms of processing, N-glycosylated. Phosphorylated; cAMP treatment promotes phosphorylation and activates the channel. Dephosphorylation decreases the ATPase activity (in vitro). Phosphorylation at PKA sites activates the channel. Phosphorylation at PKC sites enhances the response to phosphorylation by PKA. Phosphorylated by AMPK; this inhibits channel activity. Post-translationally, ubiquitinated, leading to its degradation in the lysosome. Deubiquitination by USP10 in early endosomes enhances its endocytic recycling to the cell membrane. Ubiquitinated by RNF185 during ER stress. Ubiquitinated by MARCHF2.

The protein resides in the apical cell membrane. It localises to the early endosome membrane. The protein localises to the cell membrane. It is found in the recycling endosome membrane. Its subcellular location is the endoplasmic reticulum membrane. The protein resides in the nucleus. The catalysed reaction is ATP + H2O + closed Cl(-) channel = ADP + phosphate + open Cl(-) channel.. It carries out the reaction chloride(in) = chloride(out). The enzyme catalyses hydrogencarbonate(in) = hydrogencarbonate(out). It catalyses the reaction ATP + H2O = ADP + phosphate + H(+). Functionally, epithelial ion channel that plays an important role in the regulation of epithelial ion and water transport and fluid homeostasis. Mediates the transport of chloride ions across the cell membrane. Possesses an intrinsic ATPase activity and utilizes ATP to gate its channel; the passive flow of anions through the channel is gated by cycles of ATP binding and hydrolysis by the ATP-binding domains. The ion channel is also permeable to HCO(3)(-); selectivity depends on the extracellular chloride concentration. Exerts its function also by modulating the activity of other ion channels and transporters. Contributes to the regulation of the pH and the ion content of the epithelial fluid layer. Modulates the activity of the epithelial sodium channel (ENaC) complex, in part by regulating the cell surface expression of the ENaC complex. May regulate bicarbonate secretion and salvage in epithelial cells by regulating the transporter SLC4A7. Can inhibit the chloride channel activity of ANO1. Plays a role in the chloride and bicarbonate homeostasis during sperm epididymal maturation and capacitation. This is Cystic fibrosis transmembrane conductance regulator from Papio anubis (Olive baboon).